The chain runs to 430 residues: Serine--tRNA ligase (430 aa).

237–239 is a binding site for L-serine; the sequence is TAE. Residue 268–270 participates in ATP binding; it reads RAE. Glu291 serves as a coordination point for L-serine. 355 to 358 contacts ATP; sequence EISS. Ser391 lines the L-serine pocket.

Belongs to the class-II aminoacyl-tRNA synthetase family. Type-1 seryl-tRNA synthetase subfamily. In terms of assembly, homodimer. The tRNA molecule binds across the dimer.

Its subcellular location is the cytoplasm. It carries out the reaction tRNA(Ser) + L-serine + ATP = L-seryl-tRNA(Ser) + AMP + diphosphate + H(+). It catalyses the reaction tRNA(Sec) + L-serine + ATP = L-seryl-tRNA(Sec) + AMP + diphosphate + H(+). It participates in aminoacyl-tRNA biosynthesis; selenocysteinyl-tRNA(Sec) biosynthesis; L-seryl-tRNA(Sec) from L-serine and tRNA(Sec): step 1/1. Its function is as follows. Catalyzes the attachment of serine to tRNA(Ser). Is also able to aminoacylate tRNA(Sec) with serine, to form the misacylated tRNA L-seryl-tRNA(Sec), which will be further converted into selenocysteinyl-tRNA(Sec). The polypeptide is Serine--tRNA ligase (Serratia proteamaculans (strain 568)).